The sequence spans 778 residues: High affinity nerve growth factor receptor (778 aa).

An N-terminal signal peptide occupies residues 1-14 (WGCLRLPLPLCHAL). At 15 to 400 (AAHCRCPASH…VETADEHTFG (386 aa)) the chain is on the extracellular side. A disulfide bridge connects residues Cys18 and Cys20. LRR repeat units lie at residues 71-92 (DLRHLTISNSGLQYISDDAFQD) and 95-116 (RLSHVNLSFNALTSLSWKTFQH). N-linked (GlcNAc...) asparagine glycans are attached at residues Asn100, Asn130, Asn143, Asn151, Asn194, Asn234, Asn262, Asn300, Asn320, Asn340, and Asn384. The LRRCT domain maps to 127 to 175 (NPFNCSCGIRWLQLWQNGSRAELGNQSLLCWEGSMLVALDSHPLHDCEP). A disulfide bond links Cys133 and Cys173. 2 Ig-like C2-type domains span residues 175–262 (PPTA…VMLN) and 281–347 (WCIP…VVQN). A disulfide bridge connects residues Cys282 and Cys327. The helical transmembrane segment at 401–421 (VSVAVALAVFASLFLSVMLIA) threads the bilayer. At 422 to 778 (LNKCGHRSKF…TPPIYLDILG (357 aa)) the chain is on the cytoplasmic side. Position 479 is a phosphotyrosine; by autocatalysis (Tyr479). One can recognise a Protein kinase domain in the interval 493–763 (IVLKWELGEG…RSIQDIHSRL (271 aa)). ATP is bound by residues 499–507 (LGEGAFGKV) and Lys527. Residue Asp633 is the Proton acceptor of the active site. A phosphotyrosine; by autocatalysis mark is found at Tyr659, Tyr663, Tyr664, and Tyr773.

The protein belongs to the protein kinase superfamily. Tyr protein kinase family. Insulin receptor subfamily. Exists in a dynamic equilibrium between monomeric (low affinity) and dimeric (high affinity) structures. Homodimerization is induced by NGF dimer binding. Interacts with PTPRS. Post-translationally, ligand-mediated auto-phosphorylation. Ubiquitinated. Undergoes polyubiquitination upon activation; regulated by NGFR. Ubiquitination regulates the internalization of the receptor.

The protein localises to the cell membrane. It is found in the early endosome membrane. Its subcellular location is the late endosome membrane. The protein resides in the recycling endosome membrane. It carries out the reaction L-tyrosyl-[protein] + ATP = O-phospho-L-tyrosyl-[protein] + ADP + H(+). Its activity is regulated as follows. The pro-survival signaling effect of NTRK1 in neurons requires its endocytosis into signaling early endosomes and its retrograde axonal transport. Receptor tyrosine kinase involved in the development and the maturation of the central and peripheral nervous systems through regulation of proliferation, differentiation and survival of sympathetic and nervous neurons. High affinity receptor for NGF which is its primary ligand, it can also bind and be activated by NTF3/neurotrophin-3. Upon dimeric NGF ligand-binding, undergoes homodimerization, autophosphorylation and activation. Recruits, phosphorylates and/or activates several downstream effectors that regulate distinct overlapping signaling cascades driving cell survival and differentiation. In absence of ligand and activation, may promote cell death, making the survival of neurons dependent on trophic factors. In Gallus gallus (Chicken), this protein is High affinity nerve growth factor receptor (NTRK1).